A 133-amino-acid polypeptide reads, in one-letter code: Putative pre-16S rRNA nuclease (133 aa).

Belongs to the YqgF nuclease family.

The protein localises to the cytoplasm. Functionally, could be a nuclease involved in processing of the 5'-end of pre-16S rRNA. The protein is Putative pre-16S rRNA nuclease of Bordetella pertussis (strain Tohama I / ATCC BAA-589 / NCTC 13251).